Consider the following 122-residue polypeptide: Large ribosomal subunit protein uL14 (122 aa).

This sequence belongs to the universal ribosomal protein uL14 family. As to quaternary structure, part of the 50S ribosomal subunit. Forms a cluster with proteins L3 and L19. In the 70S ribosome, L14 and L19 interact and together make contacts with the 16S rRNA in bridges B5 and B8.

Its function is as follows. Binds to 23S rRNA. Forms part of two intersubunit bridges in the 70S ribosome. This chain is Large ribosomal subunit protein uL14, found in Rhodococcus erythropolis (strain PR4 / NBRC 100887).